The primary structure comprises 142 residues: Large ribosomal subunit protein uL13 (142 aa).

This sequence belongs to the universal ribosomal protein uL13 family. Part of the 50S ribosomal subunit.

This protein is one of the early assembly proteins of the 50S ribosomal subunit, although it is not seen to bind rRNA by itself. It is important during the early stages of 50S assembly. In Shewanella denitrificans (strain OS217 / ATCC BAA-1090 / DSM 15013), this protein is Large ribosomal subunit protein uL13.